We begin with the raw amino-acid sequence, 525 residues long: GMP synthase [glutamine-hydrolyzing] (525 aa).

Positions 9–207 (RILILDFGSQ…VRDICECEAL (199 aa)) constitute a Glutamine amidotransferase type-1 domain. The active-site Nucleophile is C86. Active-site residues include H181 and E183. In terms of domain architecture, GMPS ATP-PPase spans 208-400 (WTPAKIIDDA…LGLPYDMLYR (193 aa)). 235 to 241 (SGGVDSS) contributes to the ATP binding site.

As to quaternary structure, homodimer.

It catalyses the reaction XMP + L-glutamine + ATP + H2O = GMP + L-glutamate + AMP + diphosphate + 2 H(+). The protein operates within purine metabolism; GMP biosynthesis; GMP from XMP (L-Gln route): step 1/1. In terms of biological role, catalyzes the synthesis of GMP from XMP. The protein is GMP synthase [glutamine-hydrolyzing] of Cronobacter sakazakii (strain ATCC BAA-894) (Enterobacter sakazakii).